The primary structure comprises 201 residues: Peptide deformylase 2 (201 aa).

Positions 121 and 163 each coordinate Fe cation. Glutamate 164 is a catalytic residue. Position 167 (histidine 167) interacts with Fe cation.

Belongs to the polypeptide deformylase family. It depends on Fe(2+) as a cofactor.

It carries out the reaction N-terminal N-formyl-L-methionyl-[peptide] + H2O = N-terminal L-methionyl-[peptide] + formate. Its function is as follows. Removes the formyl group from the N-terminal Met of newly synthesized proteins. Requires at least a dipeptide for an efficient rate of reaction. N-terminal L-methionine is a prerequisite for activity but the enzyme has broad specificity at other positions. This Prochlorococcus marinus (strain MIT 9313) protein is Peptide deformylase 2.